Here is a 430-residue protein sequence, read N- to C-terminus: Serine--tRNA ligase (430 aa).

L-serine is bound at residue 237 to 239; it reads TAE. 268-270 serves as a coordination point for ATP; sequence RSE. E291 lines the L-serine pocket. 355 to 358 contributes to the ATP binding site; that stretch reads EISS. An L-serine-binding site is contributed by S391.

This sequence belongs to the class-II aminoacyl-tRNA synthetase family. Type-1 seryl-tRNA synthetase subfamily. As to quaternary structure, homodimer. The tRNA molecule binds across the dimer.

The protein resides in the cytoplasm. The catalysed reaction is tRNA(Ser) + L-serine + ATP = L-seryl-tRNA(Ser) + AMP + diphosphate + H(+). It catalyses the reaction tRNA(Sec) + L-serine + ATP = L-seryl-tRNA(Sec) + AMP + diphosphate + H(+). Its pathway is aminoacyl-tRNA biosynthesis; selenocysteinyl-tRNA(Sec) biosynthesis; L-seryl-tRNA(Sec) from L-serine and tRNA(Sec): step 1/1. Catalyzes the attachment of serine to tRNA(Ser). Is also able to aminoacylate tRNA(Sec) with serine, to form the misacylated tRNA L-seryl-tRNA(Sec), which will be further converted into selenocysteinyl-tRNA(Sec). This Escherichia coli O139:H28 (strain E24377A / ETEC) protein is Serine--tRNA ligase.